We begin with the raw amino-acid sequence, 788 residues long: MGIELLCLFFLFLGRNDHVQGGCALGGAETCEDCLLIGPQCAWCSQENFTYLSGVGERCDTPANLLAKGCQLNFIENPLSQVEILTNKPLSIGRQKNSSSIVQIAPQSLTLKLRPGSEQTLQVQVRQTEDYPVDLYYLMDLSASMDDDLNTIKELGSLLSKEMSKLTSNFRLGFGSFVEKPISPFMKTTPEEIANPCSSIPYFCLPTFGFKHILPLTNDAERFNEIVKNQKISANIDTPEGGFDAIMQAAVCKEKIGWRNDSLHLLVFVSDADSHFGMDSKLAGIVIPNDGLCHLDSKNEYSMSTVLEYPTIGQLIDKLVQNNVLLIFAVTQEQVHLYENYAKLIPGATVGVLQKDSGNILQLIISAYEELRSEVELEVLGDTEGLNLSFTAICNNGTPFPHQKKCSHMKVGDTASFNMTVGIPNCEKRSRHVIVKPVGLGDALEILISPECSCDCQKEVEVNSSKCNHGNGSFQCGVCACNPGHMGPHCECGEDTLSMDSCREAPEHLSCSGRGDCYCGQCTCHLSPYGNIYGPYCQCDDFSCVRHKGLLCGDNGDCECGECVCRSGWTGEYCNCTTSTDQCVSEDGVLCSGRGDCVCGKCICTNPGASGLTCERCPTCGDPCNSKRSCIECHLSADGQAREDCVDKCKLAGATISEEEDFSKDSAVSCSLQGENDCLITFLITTDNEGKTIIHSISEKDCPKPPNSPMIMLGVSLAILLIGVVLLCIWKLLVSFHDRKEVAKFEAERSKAKWQTGTNPLYRGSTSTFKNVTYKHREKQKVDLSMDG.

An N-terminal signal peptide occupies residues M1–G21. Residues G22 to Q71 form the PSI domain. Over G22 to P709 the chain is Extracellular. 28 disulfides stabilise this stretch: C23–C41, C31–C454, C34–C59, C44–C70, C197–C204, C252–C293, C394–C406, C426–C452, C456–C476, C467–C479, C481–C490, C492–C519, C502–C517, C511–C522, C524–C537, C539–C560, C544–C558, C552–C563, C565–C574, C576–C599, C583–C597, C591–C602, C604–C614, C617–C620, C624–C670, C630–C649, C633–C645, and C678–C702. 2 N-linked (GlcNAc...) asparagine glycosylation sites follow: N48 and N97. One can recognise a VWFA domain in the interval Y131–L371. Mg(2+) contacts are provided by D140, S142, and S144. S144, D147, D148, and E179 together coordinate Ca(2+). Residues N235, D237, P239, and E240 each coordinate Ca(2+). E240 lines the Mg(2+) pocket. A glycan (N-linked (GlcNAc...) asparagine) is linked at N260. Ca(2+)-binding residues include D271 and K355. A glycan (N-linked (GlcNAc...) asparagine) is linked at N387. N418 is a glycosylation site (N-linked (GlcNAc...) asparagine). I-EGF domains are found at residues C456 to E491, C492 to Q538, C539 to N575, and C576 to E615. 2 N-linked (GlcNAc...) asparagine glycosylation sites follow: N463 and N471. The chain crosses the membrane as a helical span at residues M710–W730. The segment at K731–T758 is interaction with HAX1. Over K731–G788 the chain is Cytoplasmic.

It belongs to the integrin beta chain family. Heterodimer of an alpha and a beta subunit. Interacts with FLNB. Interacts with HAX1. ITGAV:ITGB6 interacts with FBN1. ITGAV:ITGB6 interacts with TGFB1.

It localises to the cell membrane. The protein localises to the cell junction. The protein resides in the focal adhesion. In terms of biological role, integrin alpha-V:beta-6 (ITGAV:ITGB6) is a receptor for fibronectin and cytotactin. It recognizes the sequence R-G-D in its ligands. ITGAV:ITGB6 acts as a receptor for fibrillin-1 (FBN1) and mediates R-G-D-dependent cell adhesion to FBN1. Integrin alpha-V:beta-6 (ITGAV:ITGB6) mediates R-G-D-dependent release of transforming growth factor beta-1 (TGF-beta-1) from regulatory Latency-associated peptide (LAP), thereby playing a key role in TGF-beta-1 activation. The chain is Integrin beta-6 (ITGB6) from Sus scrofa (Pig).